The sequence spans 144 residues: Granulocyte-macrophage colony-stimulating factor (144 aa).

The first 17 residues, 1-17 (MWLQGLLLLGTVACSIS), serve as a signal peptide directing secretion. A glycan (O-linked (GalNAc...) serine) is linked at Ser24. O-linked (GalNAc...) threonine glycosylation occurs at Thr27. 2 N-linked (GlcNAc...) asparagine glycosylation sites follow: Asn44 and Asn54. 2 cysteine pairs are disulfide-bonded: Cys71/Cys113 and Cys105/Cys138.

Belongs to the GM-CSF family. In terms of assembly, monomer. The signaling GM-CSF receptor complex is a dodecamer of two head-to-head hexamers of two alpha, two beta, and two ligand subunits.

It is found in the secreted. Its function is as follows. Cytokine that stimulates the growth and differentiation of hematopoietic precursor cells from various lineages, including granulocytes, macrophages, eosinophils and erythrocytes. The protein is Granulocyte-macrophage colony-stimulating factor (CSF2) of Chlorocebus aethiops (Green monkey).